Reading from the N-terminus, the 569-residue chain is 5'-AMP-activated protein kinase subunit gamma-2 (569 aa).

The disordered stretch occupies residues 1–222 (MGSAVMDTKK…TRPPLASPTH (222 aa)). S65, S71, S73, S90, S138, S143, S161, and S162 each carry phosphoserine. The segment covering 156–167 (TSGLSSSPSTPT) has biased composition (low complexity). Phosphothreonine is present on T165. The span at 179–189 (SYKHEPERLEN) shows a compositional bias: basic and acidic residues. A compositionally biased stretch (polar residues) spans 192-212 (YASSSPPDTGQRFCPSSFQSP). At S196 the chain carries Phosphoserine. 3 CBS domains span residues 275-335 (PTSS…KSPM), 357-415 (TFKP…MSDM), and 430-492 (IGTY…NLDI). ADP contacts are provided by residues R302, 317 to 322 (MLTITD), V362, 383 to 384 (HR), and K402. Residues R302, 317–322 (MLTITD), V362, H383, 383–384 (HR), K402, T432, A437, 458–459 (SA), 474–477 (SKFD), R501, H530, 530–531 (HR), and 546–549 (SLSD) each bind AMP. Residues R302, 317 to 322 (MLTITD), V362, 383 to 384 (HR), R384, and K402 contribute to the ATP site. Positions 370–391 (LFDAVYSLIKNKIHRLPVIDPI) match the AMPK pseudosubstrate motif. ADP-binding positions include 474–477 (SKFD), R501, and 530–531 (HR). Residues 474 to 477 (SKFD), R501, and 530 to 531 (HR) each bind ATP. A CBS 4 domain is found at 504-562 (YFEGVVKCNKLEILETIVDRIVRAEVHRLVVVNEADSIVGIISLSDILQALILTPAGAK).

This sequence belongs to the 5'-AMP-activated protein kinase gamma subunit family. AMPK is a heterotrimer of an alpha catalytic subunit (PRKAA1 or PRKAA2), a beta (PRKAB1 or PRKAB2) and a gamma non-catalytic subunits (PRKAG1, PRKAG2 or PRKAG3). Interacts with FNIP1 and FNIP2. Phosphorylated by ULK1; leading to negatively regulate AMPK activity and suggesting the existence of a regulatory feedback loop between ULK1 and AMPK. Post-translationally, glycosylated; O-GlcNAcylated by OGT, promoting the AMP-activated protein kinase (AMPK) activity. As to expression, isoform B is ubiquitously expressed except in liver and thymus. The highest level is detected in heart with abundant expression in placenta and testis.

Its function is as follows. AMP/ATP-binding subunit of AMP-activated protein kinase (AMPK), an energy sensor protein kinase that plays a key role in regulating cellular energy metabolism. In response to reduction of intracellular ATP levels, AMPK activates energy-producing pathways and inhibits energy-consuming processes: inhibits protein, carbohydrate and lipid biosynthesis, as well as cell growth and proliferation. AMPK acts via direct phosphorylation of metabolic enzymes, and by longer-term effects via phosphorylation of transcription regulators. Also acts as a regulator of cellular polarity by remodeling the actin cytoskeleton; probably by indirectly activating myosin. Gamma non-catalytic subunit mediates binding to AMP, ADP and ATP, leading to activate or inhibit AMPK: AMP-binding results in allosteric activation of alpha catalytic subunit (PRKAA1 or PRKAA2) both by inducing phosphorylation and preventing dephosphorylation of catalytic subunits. ADP also stimulates phosphorylation, without stimulating already phosphorylated catalytic subunit. ATP promotes dephosphorylation of catalytic subunit, rendering the AMPK enzyme inactive. The polypeptide is 5'-AMP-activated protein kinase subunit gamma-2 (PRKAG2) (Homo sapiens (Human)).